The following is a 317-amino-acid chain: Gluconeogenesis factor (317 aa).

It belongs to the gluconeogenesis factor family.

It localises to the cytoplasm. In terms of biological role, required for morphogenesis under gluconeogenic growth conditions. Required, in gluconeogenic growth conditions, for the correct localization of PBP1 and hence for displaying a normal rod shape. The chain is Gluconeogenesis factor (mgfK) from Bacillus subtilis (strain 168).